Here is a 383-residue protein sequence, read N- to C-terminus: Anhydro-N-acetylmuramic acid kinase (383 aa).

9–16 contributes to the ATP binding site; the sequence is GTSLDGID.

Belongs to the anhydro-N-acetylmuramic acid kinase family.

The enzyme catalyses 1,6-anhydro-N-acetyl-beta-muramate + ATP + H2O = N-acetyl-D-muramate 6-phosphate + ADP + H(+). It participates in amino-sugar metabolism; 1,6-anhydro-N-acetylmuramate degradation. The protein operates within cell wall biogenesis; peptidoglycan recycling. In terms of biological role, catalyzes the specific phosphorylation of 1,6-anhydro-N-acetylmuramic acid (anhMurNAc) with the simultaneous cleavage of the 1,6-anhydro ring, generating MurNAc-6-P. Is required for the utilization of anhMurNAc either imported from the medium or derived from its own cell wall murein, and thus plays a role in cell wall recycling. The polypeptide is Anhydro-N-acetylmuramic acid kinase (Clostridioides difficile (strain 630) (Peptoclostridium difficile)).